The sequence spans 263 residues: Putative hydro-lyase GK2103 (263 aa).

The protein belongs to the D-glutamate cyclase family.

This is Putative hydro-lyase GK2103 from Geobacillus kaustophilus (strain HTA426).